The following is a 652-amino-acid chain: Phosphoglucomutase 1, chloroplastic (652 aa).

Residues 1-84 (MAFSAAASAS…LAARRTLRVR (84 aa)) constitute a chloroplast transit peptide. Arginine 118 and serine 211 together coordinate alpha-D-glucose 1,6-bisphosphate. Residue serine 211 is the Phosphoserine intermediate of the active site. Positions 211, 376, 378, and 380 each coordinate Mg(2+). At serine 211 the chain carries Phosphoserine. Alpha-D-glucose 1,6-bisphosphate contacts are provided by aspartate 380, arginine 381, threonine 443, glutamate 462, serine 464, and lysine 475.

The protein belongs to the phosphohexose mutase family. Mg(2+) is required as a cofactor.

The protein localises to the plastid. Its subcellular location is the chloroplast. It catalyses the reaction alpha-D-glucose 1-phosphate = alpha-D-glucose 6-phosphate. The enzyme catalyses O-phospho-L-seryl-[protein] + alpha-D-glucose 1-phosphate = alpha-D-glucose 1,6-bisphosphate + L-seryl-[protein]. The catalysed reaction is alpha-D-glucose 1,6-bisphosphate + L-seryl-[protein] = O-phospho-L-seryl-[protein] + alpha-D-glucose 6-phosphate. Its activity is regulated as follows. Inhibited by the Calvin cycle intermediates fructose-1,6-bisphosphate and ribulose-1,5-bisphosphate. Catalyzes the reversible isomerization of alpha-D-glucose 1-phosphate to alpha-D-glucose 6-phosphate. The mechanism proceeds via the intermediate compound alpha-D-glucose 1,6-bisphosphate. This enzyme participates in both the breakdown and synthesis of glucose. Required for sucrose production and accumulation necessary during plant development. Promotes gravitropic responses, negative in shoots but positive in roots, by facilitating starch granules (statoliths) formation. The polypeptide is Phosphoglucomutase 1, chloroplastic (Marchantia polymorpha (Common liverwort)).